The following is a 337-amino-acid chain: tRNA(Ile)-lysidine synthase (337 aa).

40–45 (SGGQDS) provides a ligand contact to ATP.

This sequence belongs to the tRNA(Ile)-lysidine synthase family.

It is found in the cytoplasm. It carries out the reaction cytidine(34) in tRNA(Ile2) + L-lysine + ATP = lysidine(34) in tRNA(Ile2) + AMP + diphosphate + H(+). Its function is as follows. Ligates lysine onto the cytidine present at position 34 of the AUA codon-specific tRNA(Ile) that contains the anticodon CAU, in an ATP-dependent manner. Cytidine is converted to lysidine, thus changing the amino acid specificity of the tRNA from methionine to isoleucine. The protein is tRNA(Ile)-lysidine synthase of Parasynechococcus marenigrum (strain WH8102).